A 564-amino-acid chain; its full sequence is M protein, serotype 12 (564 aa).

The first 41 residues, 1–41, serve as a signal peptide directing secretion; that stretch reads MAKNTTNRHYSLRKLKTGTASVAVALTVVGAGLVAGQTVRA. Residues 44 to 505 adopt a coiled-coil conformation; the sequence is SDLVAEKQRL…RAGKASDSQT (462 aa). C repeat units lie at residues 285 to 319, 327 to 361, 363 to 397, and 405 to 439; these read KQLE…EAEL, AKVT…VEAA, KQLE…EKDL, and DKVK…EKAL. 2 disordered regions span residues 372 to 391 and 404 to 438; these read SEAS…EAKK and LDKV…VEKA. 2 stretches are compositionally biased toward basic and acidic residues: residues 404-413 and 421-438; these read LDKVKEEKQI and LRRD…VEKA. D repeat units follow at residues 472 to 477, 478 to 483, 486 to 491, and 493 to 498; these read AKLEAE, AKALKE, AKQAEE, and AKLRAG. Residues 493-550 form a disordered region; that stretch reads AKLRAGKASDSQTPDAKPGNKAVPGKGQAPQAGTKPNQNKAPMKETKRQLPSTGETAN. The short motif at 542-546 is the LPXTG sorting signal element; sequence LPSTG. At T545 the chain carries Pentaglycyl murein peptidoglycan amidated threonine. A propeptide spans 546–564 (removed by sortase); the sequence is GETANPFFTAAALTVMAAA.

The protein belongs to the M protein family.

It is found in the secreted. The protein localises to the cell wall. Functionally, this protein is one of the different antigenic serotypes of protein M. Protein M is closely associated with virulence of the bacterium and can render the organism resistant to phagocytosis. In Streptococcus pyogenes, this protein is M protein, serotype 12 (emm12).